Here is a 236-residue protein sequence, read N- to C-terminus: Three prime repair exonuclease 2 (236 aa).

Aspartate 14 and glutamate 16 together coordinate Mg(2+). Residues 16–17 and tyrosine 122 contribute to the substrate site; that span reads EA. Histidine 188 serves as the catalytic Proton donor/acceptor. Aspartate 193 serves as a coordination point for Mg(2+). Aspartate 193 provides a ligand contact to substrate.

The protein belongs to the exonuclease superfamily. TREX family. Homodimer. The cofactor is Mg(2+). As to expression, detected in heart, breast, prostate, skeletal muscle, testis, uterus, bone marrow, colon, small intestine, stomach and thymus.

The protein resides in the nucleus. The catalysed reaction is Exonucleolytic cleavage in the 3'- to 5'-direction to yield nucleoside 5'-phosphates.. Its function is as follows. Exonuclease with a preference for double-stranded DNA with mismatched 3' termini. May play a role in DNA repair. The polypeptide is Three prime repair exonuclease 2 (TREX2) (Homo sapiens (Human)).